A 263-amino-acid chain; its full sequence is ATP synthase subunit a (263 aa).

5 helical membrane passes run 31–51, 89–109, 133–153, 205–225, and 235–255; these read LDTL…FYSI, IGSL…MDLI, DPNA…VYTF, LFGN…LPFW, and AIFH…LTIV.

This sequence belongs to the ATPase A chain family. In terms of assembly, F-type ATPases have 2 components, CF(1) - the catalytic core - and CF(0) - the membrane proton channel. CF(1) has five subunits: alpha(3), beta(3), gamma(1), delta(1), epsilon(1). CF(0) has three main subunits: a(1), b(2) and c(9-12). The alpha and beta chains form an alternating ring which encloses part of the gamma chain. CF(1) is attached to CF(0) by a central stalk formed by the gamma and epsilon chains, while a peripheral stalk is formed by the delta and b chains.

The protein resides in the cell inner membrane. Functionally, key component of the proton channel; it plays a direct role in the translocation of protons across the membrane. This is ATP synthase subunit a from Dichelobacter nodosus (strain VCS1703A).